A 479-amino-acid polypeptide reads, in one-letter code: Ribulose bisphosphate carboxylase large chain (479 aa).

Residues 1–2 (MS) constitute a propeptide that is removed on maturation. Pro3 carries the N-acetylproline modification. Substrate contacts are provided by Asn123 and Thr173. Lys175 (proton acceptor) is an active-site residue. Residue Lys177 participates in substrate binding. Positions 201, 203, and 204 each coordinate Mg(2+). At Lys201 the chain carries N6-carboxylysine. His294 (proton acceptor) is an active-site residue. Substrate contacts are provided by Arg295, His327, and Ser379.

Belongs to the RuBisCO large chain family. Type I subfamily. In terms of assembly, heterohexadecamer of 8 large chains and 8 small chains; disulfide-linked. The disulfide link is formed within the large subunit homodimers. Requires Mg(2+) as cofactor. Post-translationally, the disulfide bond which can form in the large chain dimeric partners within the hexadecamer appears to be associated with oxidative stress and protein turnover.

The protein resides in the plastid. It is found in the chloroplast. It carries out the reaction 2 (2R)-3-phosphoglycerate + 2 H(+) = D-ribulose 1,5-bisphosphate + CO2 + H2O. The catalysed reaction is D-ribulose 1,5-bisphosphate + O2 = 2-phosphoglycolate + (2R)-3-phosphoglycerate + 2 H(+). RuBisCO catalyzes two reactions: the carboxylation of D-ribulose 1,5-bisphosphate, the primary event in carbon dioxide fixation, as well as the oxidative fragmentation of the pentose substrate in the photorespiration process. Both reactions occur simultaneously and in competition at the same active site. The polypeptide is Ribulose bisphosphate carboxylase large chain (Hordeum vulgare (Barley)).